The sequence spans 391 residues: Metal tolerance protein 7 (391 aa).

Residues 1 to 21 (MGSRGRRGGGERETETEEDET) are disordered. Over 1-103 (MGSRGRRGGG…LRQMAKGERL (103 aa)) the chain is Cytoplasmic. A helical membrane pass occupies residues 104–124 (AINLSNIINLILFIGKVLASV). At 125–134 (ESLSMAVIAS) the chain is on the vacuolar side. A helical transmembrane segment spans residues 135-155 (TLDSLLDLLSGFILWFTAHAM). Over 156 to 171 (KKPNKYSYPIGKRRMQ) the chain is Cytoplasmic. A helical membrane pass occupies residues 172–192 (PVGIIVFASVMGTLGFQVLIE). Topologically, residues 193–210 (SGRQLITNEHQVFDHRKE) are vacuolar. A helical membrane pass occupies residues 211–231 (LWMIGSMSSVAVVKFFLMLYC). At 232–246 (RSFKNEIVRAYAQDH) the chain is on the cytoplasmic side. The helical transmembrane segment at 247 to 264 (FFDVITNSVGLVSALLAV) threads the bilayer. Residues 265–266 (RY) are Vacuolar-facing. The chain crosses the membrane as a helical span at residues 267 to 287 (KWWMDPVGAILIAVYTITTWA). The Cytoplasmic segment spans residues 288–391 (RTVVENVGTL…THRPEHKAEV (104 aa)).

Belongs to the cation diffusion facilitator (CDF) transporter (TC 2.A.4) family. SLC30A subfamily.

It is found in the vacuole membrane. Its function is as follows. Involved in sequestration of excess metal in the cytoplasm into vacuoles to maintain metal homeostasis. This Oryza sativa subsp. japonica (Rice) protein is Metal tolerance protein 7 (MTP7).